A 152-amino-acid chain; its full sequence is Ubiquitin-conjugating enzyme E2 N (152 aa).

Residues 3 to 149 (GLPRRIIKET…ARAWTRLYAM (147 aa)) form the UBC core domain. At Lys-82 the chain carries N6-acetyllysine. The active-site Glycyl thioester intermediate is Cys-87. Lys-92 is covalently cross-linked (Glycyl lysine isopeptide (Lys-Gly) (interchain with G-Cter in ISG15)).

This sequence belongs to the ubiquitin-conjugating enzyme family. In terms of assembly, heterodimer with UBE2V2. Interacts (UBE2V2-UBE2N heterodimer) with the E3 ligase STUB1 (via the U-box domain); the complex has a specific 'Lys-63'-linked polyubiquitination activity. Interacts with RNF8 and RNF168. Interacts with RNF11. Interacts with the E3 ligases, HLTF and SHPRH; the interactions promote the 'Lys-63'-linked polyubiquitination of PCNA upon genotoxic stress and lead to DNA repair. Interacts with ARIH2 (via RING-type 2). Interacts with OTUB1; leading to inhibit E2-conjugating activity. Interacts with RIGI and RNF135; involved in RIGI ubiquitination and activation. Post-translationally, conjugation to ISG15 impairs formation of the thioester bond with ubiquitin but not interaction with UBE2V2.

The enzyme catalyses S-ubiquitinyl-[E1 ubiquitin-activating enzyme]-L-cysteine + [E2 ubiquitin-conjugating enzyme]-L-cysteine = [E1 ubiquitin-activating enzyme]-L-cysteine + S-ubiquitinyl-[E2 ubiquitin-conjugating enzyme]-L-cysteine.. It participates in protein modification; protein ubiquitination. Its activity is regulated as follows. Activity is inhibited by binding to OTUB1, which prevents 'Lys-63'-linked polyubiquitination. The UBE2V1-UBE2N and UBE2V2-UBE2N heterodimers catalyze the synthesis of non-canonical 'Lys-63'-linked polyubiquitin chains. This type of polyubiquitination does not lead to protein degradation by the proteasome. Mediates transcriptional activation of target genes. Plays a role in the control of progress through the cell cycle and differentiation. Plays a role in the error-free DNA repair pathway and contributes to the survival of cells after DNA damage. Acts together with the E3 ligases, HLTF and SHPRH, in the 'Lys-63'-linked poly-ubiquitination of PCNA upon genotoxic stress, which is required for DNA repair. Appears to act together with E3 ligase RNF5 in the 'Lys-63'-linked polyubiquitination of JKAMP thereby regulating JKAMP function by decreasing its association with components of the proteasome and ERAD. Promotes TRIM5 capsid-specific restriction activity and the UBE2V1-UBE2N heterodimer acts in concert with TRIM5 to generate 'Lys-63'-linked polyubiquitin chains which activate the MAP3K7/TAK1 complex which in turn results in the induction and expression of NF-kappa-B and MAPK-responsive inflammatory genes. Together with RNF135 and UB2V1, catalyzes the viral RNA-dependent 'Lys-63'-linked polyubiquitination of RIGI to activate the downstream signaling pathway that leads to interferon beta production. UBE2V1-UBE2N together with TRAF3IP2 E3 ubiquitin ligase mediate 'Lys-63'-linked polyubiquitination of TRAF6, a component of IL17A-mediated signaling pathway. The polypeptide is Ubiquitin-conjugating enzyme E2 N (UBE2N) (Macaca fascicularis (Crab-eating macaque)).